Here is a 448-residue protein sequence, read N- to C-terminus: Adenylosuccinate synthetase (448 aa).

Residues Gly22 to Lys28 and Gly50 to Thr52 each bind GTP. The active-site Proton acceptor is the Asp23. Mg(2+)-binding residues include Asp23 and Gly50. Residues Asp23–Lys26, Asn48–His51, Thr139, Arg153, Gln234, Thr249, and Arg321 contribute to the IMP site. The Proton donor role is filled by His51. Residue Ser317 to Arg323 coordinates substrate. GTP-binding positions include Arg323, Lys349–Asp351, and Ser431–Gly433.

This sequence belongs to the adenylosuccinate synthetase family. As to quaternary structure, homodimer. Mg(2+) serves as cofactor.

It localises to the cytoplasm. The enzyme catalyses IMP + L-aspartate + GTP = N(6)-(1,2-dicarboxyethyl)-AMP + GDP + phosphate + 2 H(+). The protein operates within purine metabolism; AMP biosynthesis via de novo pathway; AMP from IMP: step 1/2. In terms of biological role, plays an important role in the de novo pathway of purine nucleotide biosynthesis. Catalyzes the first committed step in the biosynthesis of AMP from IMP. The protein is Adenylosuccinate synthetase of Burkholderia pseudomallei (strain 1106a).